Consider the following 174-residue polypeptide: Magnetosome protein MamT (174 aa).

The Cytoplasmic segment spans residues 1–9; it reads MGTPGGGRR. Residues 10–28 form a helical membrane-spanning segment; it reads WMTLISITLLMVVGLGLYW. At 29 to 174 the chain is on the lumenal side; sequence DELSLSAGIS…EKKSGIKWLL (146 aa). Residues 87–107 carry the MCR (magnetochrome) 1 motif; that stretch reads VMPGTGMPHPYVGDCIQCHLM. The heme site is built by C101, C104, H105, C152, C155, and H156. Residues 138 to 158 carry the MCR 2 motif; the sequence is ILPTTRQPHPPAGRCIKCHDI.

It belongs to the magnetosome MamT family. Requires heme as cofactor.

It is found in the magnetosome membrane. In terms of biological role, may play a role in magnetite crystal maturation. May transfer electrons to balance the Fe(2+)-Fe(3+) ratio during magnetite formation. The protein is Magnetosome protein MamT of Magnetospirillum gryphiswaldense (strain DSM 6361 / JCM 21280 / NBRC 15271 / MSR-1).